The primary structure comprises 732 residues: Polyribonucleotide nucleotidyltransferase (732 aa).

Positions 489 and 495 each coordinate Mg(2+). A KH domain is found at 556–615; that stretch reads PKIDTIQIDVDKIKIVIGKGGETIDKIIAETGVKIDIDEEGLVQIFSSDQAAIDRTKEII. One can recognise an S1 motif domain in the interval 625 to 693; it reads GEVYHAKVVR…DKGRVDASMK (69 aa). Positions 691–732 are disordered; the sequence is SMKALIPRPPKPEKKEEKASEAKEASNDQASKSQSETASEEK. A compositionally biased stretch (basic and acidic residues) spans 700–716; sequence PKPEKKEEKASEAKEAS. The segment covering 717 to 732 has biased composition (polar residues); it reads NDQASKSQSETASEEK.

It belongs to the polyribonucleotide nucleotidyltransferase family. It depends on Mg(2+) as a cofactor.

It localises to the cytoplasm. The catalysed reaction is RNA(n+1) + phosphate = RNA(n) + a ribonucleoside 5'-diphosphate. Involved in mRNA degradation. Catalyzes the phosphorolysis of single-stranded polyribonucleotides processively in the 3'- to 5'-direction. The protein is Polyribonucleotide nucleotidyltransferase of Streptococcus uberis (strain ATCC BAA-854 / 0140J).